We begin with the raw amino-acid sequence, 290 residues long: MTQQSLTLSLKKIYSGKVRDLYEIDDKRMLMVASDRLSAFDVILDDPIPRKGEILTQISNFWFNKLAHIMPNHFTGDSVYDVLPKEEADLIKDRAVVCKRLTPIKIESIVRGYLTGSGLKDYKQTGTICGLKLPENLVEASKLPEAIFTPSSKEEVGNHDINISYAECEKLIGSDLAAQVKEKAIALYTEASEYALTKGIIICDTKFEFGLDENGTLTLMDEVLTPDSSRFWSVDTYQAGTNPPSFDKQFVRDWLENSGWNKQAPAPKVPKNIIQKTVDKYQEALDLLTK.

This sequence belongs to the SAICAR synthetase family.

The enzyme catalyses 5-amino-1-(5-phospho-D-ribosyl)imidazole-4-carboxylate + L-aspartate + ATP = (2S)-2-[5-amino-1-(5-phospho-beta-D-ribosyl)imidazole-4-carboxamido]succinate + ADP + phosphate + 2 H(+). It functions in the pathway purine metabolism; IMP biosynthesis via de novo pathway; 5-amino-1-(5-phospho-D-ribosyl)imidazole-4-carboxamide from 5-amino-1-(5-phospho-D-ribosyl)imidazole-4-carboxylate: step 1/2. The polypeptide is Phosphoribosylaminoimidazole-succinocarboxamide synthase (Haemophilus influenzae (strain PittEE)).